Reading from the N-terminus, the 320-residue chain is HPr kinase/phosphorylase (320 aa).

Catalysis depends on residues histidine 141 and lysine 162. 156-163 (GHSGLGKS) contacts ATP. Serine 163 serves as a coordination point for Mg(2+). Aspartate 180 acts as the Proton acceptor; for phosphorylation activity. Proton donor; for dephosphorylation activity in catalysis. The interval 204 to 213 (LEVRGLGILN) is important for the catalytic mechanism of both phosphorylation and dephosphorylation. Glutamate 205 contacts Mg(2+). Arginine 248 is an active-site residue. The segment at 269-274 (PVAVGR) is important for the catalytic mechanism of dephosphorylation.

It belongs to the HPrK/P family. In terms of assembly, homohexamer. Requires Mg(2+) as cofactor.

The catalysed reaction is [HPr protein]-L-serine + ATP = [HPr protein]-O-phospho-L-serine + ADP + H(+). It carries out the reaction [HPr protein]-O-phospho-L-serine + phosphate + H(+) = [HPr protein]-L-serine + diphosphate. In terms of biological role, catalyzes the ATP- as well as the pyrophosphate-dependent phosphorylation of a specific serine residue in HPr, a phosphocarrier protein of the phosphoenolpyruvate-dependent sugar phosphotransferase system (PTS). HprK/P also catalyzes the pyrophosphate-producing, inorganic phosphate-dependent dephosphorylation (phosphorolysis) of seryl-phosphorylated HPr (P-Ser-HPr). In Neisseria gonorrhoeae (strain ATCC 700825 / FA 1090), this protein is HPr kinase/phosphorylase.